Consider the following 357-residue polypeptide: Biotin synthase (357 aa).

A disordered region spans residues 1–27 (MTTAETKPATETGENAGTTGTAGTAAT). Positions 9-27 (ATETGENAGTTGTAGTAAT) are enriched in low complexity. Positions 78–303 (DAVEMEGIIS…RQLLRFAGGR (226 aa)) constitute a Radical SAM core domain. 3 residues coordinate [4Fe-4S] cluster: Cys93, Cys97, and Cys100. [2Fe-2S] cluster contacts are provided by Cys136, Cys228, and Arg298.

Belongs to the radical SAM superfamily. Biotin synthase family. Homodimer. Requires [4Fe-4S] cluster as cofactor. [2Fe-2S] cluster serves as cofactor.

The catalysed reaction is (4R,5S)-dethiobiotin + (sulfur carrier)-SH + 2 reduced [2Fe-2S]-[ferredoxin] + 2 S-adenosyl-L-methionine = (sulfur carrier)-H + biotin + 2 5'-deoxyadenosine + 2 L-methionine + 2 oxidized [2Fe-2S]-[ferredoxin]. It participates in cofactor biosynthesis; biotin biosynthesis; biotin from 7,8-diaminononanoate: step 2/2. Functionally, catalyzes the conversion of dethiobiotin (DTB) to biotin by the insertion of a sulfur atom into dethiobiotin via a radical-based mechanism. The sequence is that of Biotin synthase from Corynebacterium jeikeium (strain K411).